A 395-amino-acid chain; its full sequence is Transcriptional coactivator yorkie (395 aa).

The tract at residues 73 to 100 (NSFFTPPAPSHSRANSADSTYDAGSQSS) is disordered. Ser82, Ser88, Ser100, Ser117, and Ser145 each carry phosphoserine. A compositionally biased stretch (polar residues) spans 84-100 (SRANSADSTYDAGSQSS). Disordered regions lie at residues 129 to 150 (PSPQ…PASL) and 162 to 199 (AAAA…PASS). Phosphoserine; by CDK7 is present on Ser146. The residue at position 149 (Ser149) is a Phosphoserine. Residues 162-179 (AAAANNPNANPSSQQQPA) show a composition bias toward low complexity. Ser227 carries the phosphoserine modification. Residue Tyr228 is modified to Phosphotyrosine. Ser232 carries the phosphoserine modification. WW domains are found at residues 241-274 (GALP…DPRI) and 310-343 (GPLP…DPRM).

Belongs to the YAP1 family. Interacts (via WW domains) with wts. Interacts (via N-terminus) with sd (via C-terminus) and this interaction enhances the transcriptional activity of sd. The phosphorylated form interacts with 14-3-3epsilon and 14-3-3zeta. Interacts with Ack and ex. In terms of processing, its activity is regulated by multiple phosphorylation events. Phosphorylation at Ser-88, Ser-145 and Ser-227 negatively regulate its activity and restrict its nuclear localization. Wts-mediated phosphorylation at Ser-145 promotes interaction with 14-3-3epsilon and 14-3-3zeta. Phosphorylation at Ser-88 and Ser-227 regulate nuclear localization and activity independent of 14-3-3 association. Phosphorylation at Ser-146 by Cdk7 promotes its stability by preventing ubiquitination by the DCX(DCAF12) complex. Ubiquitinated by the DCX(DCAF12) complex, leading to its degradation. Phosphorylation at Ser-146 by Cdk7 prevents ubiquitination by the DCX(DCAF12) complex.

Its subcellular location is the cytoplasm. It is found in the nucleus. In terms of biological role, transcriptional coactivator which is the critical downstream regulatory target in the Hippo/SWH (Sav/Wts/Hpo) signaling pathway that plays a pivotal role in organ size control and tumor suppression by restricting proliferation and promoting apoptosis. The core of this pathway is composed of a kinase cascade wherein Hippo (Hpo), in complex with its regulatory protein Salvador (Sav), phosphorylates and activates Warts (Wts) in complex with its regulatory protein Mats, which in turn phosphorylates and inactivates the Yorkie (Yki) oncoprotein. The Hippo/SWH signaling pathway inhibits the activity of the transcriptional complex formed by Scalloped (sd) and Yki and the target genes of this pathway include cyclin-E (cycE), diap1 and bantam. Regulates the expression of G1/S-specific CycE and diap1, thereby promoting cell proliferation and inhibiting apoptosis. Required for transcriptional activity of sd in wing imaginal disks. Induces expression of expression of vestigial (vg) in wing and haltere disks and the expression of transcription factor E2f (E2f). The sequence is that of Transcriptional coactivator yorkie (yki) from Drosophila melanogaster (Fruit fly).